A 295-amino-acid polypeptide reads, in one-letter code: Ethanolamine ammonia-lyase small subunit (295 aa).

Adenosylcob(III)alamin-binding residues include V207, E228, and C258.

The protein belongs to the EutC family. The basic unit is a heterodimer which dimerizes to form tetramers. The heterotetramers trimerize; 6 large subunits form a core ring with 6 small subunits projecting outwards. Requires adenosylcob(III)alamin as cofactor.

The protein resides in the bacterial microcompartment. It catalyses the reaction ethanolamine = acetaldehyde + NH4(+). The protein operates within amine and polyamine degradation; ethanolamine degradation. Its function is as follows. Catalyzes the deamination of various vicinal amino-alcohols to oxo compounds. Allows this organism to utilize ethanolamine as the sole source of nitrogen and carbon in the presence of external vitamin B12. This is Ethanolamine ammonia-lyase small subunit from Escherichia coli O81 (strain ED1a).